Consider the following 650-residue polypeptide: Chaperone protein DnaK (650 aa).

A Phosphothreonine; by autocatalysis modification is found at Thr-200. Low complexity predominate over residues 612-636 (QQAGAAGAAGAAEGAAHAGGAQQAA). The disordered stretch occupies residues 612–650 (QQAGAAGAAGAAEGAAHAGGAQQAADDVVDAEFKEVKKD).

This sequence belongs to the heat shock protein 70 family.

Acts as a chaperone. This is Chaperone protein DnaK from Burkholderia ambifaria (strain ATCC BAA-244 / DSM 16087 / CCUG 44356 / LMG 19182 / AMMD) (Burkholderia cepacia (strain AMMD)).